We begin with the raw amino-acid sequence, 1114 residues long: Proto-oncogene tyrosine-protein kinase receptor Ret (1114 aa).

A signal peptide spans 1–28 (MAKATSGAAGLRLLLLLLLPLLGKVALG). The tract at residues 29–153 (LYFSRDAYWE…RVYFSFFNTS (125 aa)) is cadherin-like region 1 (CLD1). Residues 29 to 635 (LYFSRDAYWE…QDPLCDELCR (607 aa)) lie on the Extracellular side of the membrane. An N-linked (GlcNAc...) asparagine glycan is attached at Asn98. Cys137 and Cys142 are disulfide-bonded. Residue Asn151 is glycosylated (N-linked (GlcNAc...) asparagine). Disulfide bonds link Cys157/Cys197 and Cys166/Cys243. One can recognise a Cadherin domain in the interval 168 to 272 (PETRPSFRIR…YDEDDSAPTF (105 aa)). Glu178 and Asn179 together coordinate Ca(2+). Asn199 is a glycosylation site (N-linked (GlcNAc...) asparagine). Ca(2+)-binding residues include Asp230, Glu232, Asp264, Glu265, Asp266, Asp267, Ser268, Asp300, and Asp302. Positions 265–379 (EDDSAPTFPA…MQLAVLVNDS (115 aa)) are cadherin-like region 3 (CLD3). 5 N-linked (GlcNAc...) asparagine glycosylation sites follow: Asn336, Asn343, Asn361, Asn367, and Asn377. Asp378 is a Ca(2+) binding site. Asn394 carries an N-linked (GlcNAc...) asparagine glycan. The segment at 405–506 (PSTYSLSVSR…QAQLLVTVEG (102 aa)) is cadherin-like region 4 (CLD4). A disulfide bridge connects residues Cys426 and Cys430. N-linked (GlcNAc...) asparagine glycans are attached at residues Asn448 and Asn468. Disulfide bonds link Cys449-Cys478, Cys515-Cys531, Cys519-Cys541, and Cys528-Cys558. Asn554 is a glycosylation site (N-linked (GlcNAc...) asparagine). Ca(2+)-binding residues include Thr564, Cys565, Asp567, His569, Glu574, and Asp584. Cystine bridges form between Cys565–Cys581, Cys570–Cys585, Cys609–Cys620, Cys611–Cys618, and Cys630–Cys634. Residues 636 to 657 (TVIAAAVLFSFIVSVLLSAFCI) form a helical membrane-spanning segment. Over 658-1114 (HCYHKFAHKP…AAKLMDTFDS (457 aa)) the chain is Cytoplasmic. Tyr687 is modified (phosphotyrosine; by autocatalysis). Ser688 carries O-linked (GlcNAc) serine glycosylation. Ser696 is modified (phosphoserine). One can recognise a Protein kinase domain in the interval 724 to 1016 (LVLGKTLGEG…KMMVKRRDYL (293 aa)). Residues 730-738 (LGEGEFGKV) and Lys758 each bind ATP. 805–807 (EYA) serves as a coordination point for semaxanib. Phosphotyrosine; by autocatalysis occurs at positions 806, 809, and 826. Asp874 acts as the Proton acceptor in catalysis. A phosphotyrosine; by autocatalysis mark is found at Tyr900, Tyr905, Tyr981, Tyr1015, Tyr1029, Tyr1062, Tyr1090, and Tyr1096.

Belongs to the protein kinase superfamily. Tyr protein kinase family. Phosphorylated form interacts with the PBT domain of DOK2, DOK4 and DOK5. The phosphorylated form interacts with PLCG1 and GRB7. Interacts (not phosphorylated) with PTK2/FAK1 (via FERM domain). Extracellular cell-membrane anchored RET cadherin fragments form complex in neurons with reduced trophic status, preferentially at the contact sites between somas. Interacts with AIP in the pituitary gland; this interaction prevents the formation of the AIP-survivin complex. Interacts (inactive) with CBLC and CD2AP; dissociates upon activation by GDNF which increases CBLC:CD2AP interaction. It depends on Ca(2+) as a cofactor. In terms of processing, autophosphorylated on C-terminal tyrosine residues upon ligand stimulation. Post-translationally, proteolytically cleaved by caspase-3. The soluble RET kinase fragment is able to induce cell death. The extracellular cell-membrane anchored RET cadherin fragment accelerates cell adhesion in sympathetic neurons.

It localises to the cell membrane. Its subcellular location is the endosome membrane. It carries out the reaction L-tyrosyl-[protein] + ATP = O-phospho-L-tyrosyl-[protein] + ADP + H(+). With respect to regulation, repressed by 4-(3-hydroxyanilino)-quinolines derivatives, indolin-2-one-derivatives, 2-(alkylsulfanyl)-4-(3-thienyl) nicotinonitrile analogs, 3- and 4-substituted beta-carbolin-1-ones, vandetanib, motesanib, sorafenib (BAY 43-9006), cabozantinib (XL184), lenvatinib, sunitinib, nintedanib, and withaferin A (WA). Inactivation by sorafenib both reduces kinase activity and promotes lysosomal degradation. Functionally, receptor tyrosine-protein kinase involved in numerous cellular mechanisms including cell proliferation, neuronal navigation, cell migration, and cell differentiation in response to glia cell line-derived growth family factors (GDNF, NRTN, ARTN, PSPN and GDF15). In contrast to most receptor tyrosine kinases, RET requires not only its cognate ligands but also coreceptors, for activation. GDNF ligands (GDNF, NRTN, ARTN, PSPN and GDF15) first bind their corresponding GDNFR coreceptors (GFRA1, GFRA2, GFRA3, GFRA4 and GFRAL, respectively), triggering RET autophosphorylation and activation, leading to activation of downstream signaling pathways, including the MAPK- and AKT-signaling pathways. Acts as a dependence receptor via the GDNF-GFRA1 signaling: in the presence of the ligand GDNF in somatotrophs within pituitary, promotes survival and down regulates growth hormone (GH) production, but triggers apoptosis in absence of GDNF. Required for the molecular mechanisms orchestration during intestine organogenesis via the ARTN-GFRA3 signaling: involved in the development of enteric nervous system and renal organogenesis during embryonic life, and promotes the formation of Peyer's patch-like structures, a major component of the gut-associated lymphoid tissue. Mediates, through interaction with GDF15-receptor GFRAL, GDF15-induced cell-signaling in the brainstem which triggers an aversive response, characterized by nausea, vomiting, and/or loss of appetite in response to various stresses. Modulates cell adhesion via its cleavage by caspase in sympathetic neurons and mediates cell migration in an integrin (e.g. ITGB1 and ITGB3)-dependent manner. Also active in the absence of ligand, triggering apoptosis through a mechanism that requires receptor intracellular caspase cleavage. Triggers the differentiation of rapidly adapting (RA) mechanoreceptors. Involved in the development of the neural crest. Regulates nociceptor survival and size. Phosphorylates PTK2/FAK1. Its function is as follows. Isoform 1 in complex with GFRAL induces higher activation of MAPK-signaling pathway than isoform 2 in complex with GFRAL. This is Proto-oncogene tyrosine-protein kinase receptor Ret from Homo sapiens (Human).